The chain runs to 139 residues: D-ribose pyranase (139 aa).

Histidine 20 acts as the Proton donor in catalysis. Residues aspartate 28, histidine 106, and 128–130 (YAN) each bind substrate.

The protein belongs to the RbsD / FucU family. RbsD subfamily. Homodecamer.

The protein resides in the cytoplasm. It carries out the reaction beta-D-ribopyranose = beta-D-ribofuranose. It functions in the pathway carbohydrate metabolism; D-ribose degradation; D-ribose 5-phosphate from beta-D-ribopyranose: step 1/2. Catalyzes the interconversion of beta-pyran and beta-furan forms of D-ribose. The polypeptide is D-ribose pyranase (Pectobacterium carotovorum subsp. carotovorum (strain PC1)).